Consider the following 269-residue polypeptide: UPF0329 protein ECU04_1660 (269 aa).

Over residues 1 to 12 the composition is skewed to basic and acidic residues; it reads MEERERGKEKGS. The disordered stretch occupies residues 1–74; the sequence is MEERERGKEK…SPKEKSKGEE (74 aa). Residues 13–23 are compositionally biased toward basic residues; that stretch reads KGKGRKKRGKK. Basic and acidic residues predominate over residues 24 to 36; the sequence is GAGEAKEESKEED. Acidic residues predominate over residues 37 to 51; that stretch reads RGEEEEESVEADVPV.

The protein belongs to the UPF0329 family.

This chain is UPF0329 protein ECU04_1660, found in Encephalitozoon cuniculi (strain GB-M1) (Microsporidian parasite).